We begin with the raw amino-acid sequence, 298 residues long: tRNA dimethylallyltransferase (298 aa).

16-23 (GPTASGKS) is an ATP binding site. 18–23 (TASGKS) provides a ligand contact to substrate. Interaction with substrate tRNA stretches follow at residues 41–44 (DSMQ) and 165–169 (QRIVR).

This sequence belongs to the IPP transferase family. In terms of assembly, monomer. Requires Mg(2+) as cofactor.

The catalysed reaction is adenosine(37) in tRNA + dimethylallyl diphosphate = N(6)-dimethylallyladenosine(37) in tRNA + diphosphate. Functionally, catalyzes the transfer of a dimethylallyl group onto the adenine at position 37 in tRNAs that read codons beginning with uridine, leading to the formation of N6-(dimethylallyl)adenosine (i(6)A). The sequence is that of tRNA dimethylallyltransferase from Rhizobium rhizogenes (strain K84 / ATCC BAA-868) (Agrobacterium radiobacter).